Here is a 1872-residue protein sequence, read N- to C-terminus: Plexin-A3 (1872 aa).

The signal sequence occupies residues 1–19 (MHTVCLLPLLFFTIGGCLG). One can recognise a Sema domain in the interval 20–489 (SSRPFRTFVV…SEKQVSQLPV (470 aa)). Residues 20–1220 (SSRPFRTFVV…ITADRALTLP (1201 aa)) lie on the Extracellular side of the membrane. An N-linked (GlcNAc...) asparagine glycan is attached at Asn-60. Cystine bridges form between Cys-78–Cys-87, Cys-113–Cys-121, Cys-267–Cys-388, Cys-283–Cys-339, Cys-357–Cys-376, Cys-492–Cys-509, Cys-498–Cys-540, Cys-501–Cys-518, and Cys-512–Cys-524. Residue Asn-549 is glycosylated (N-linked (GlcNAc...) asparagine). Cys-575 and Cys-595 form a disulfide bridge. 4 IPT/TIG domains span residues 841 to 934 (PRIT…YSFV), 936 to 1021 (PTLD…YTYT), 1024 to 1123 (PTVT…FTYY), and 1126 to 1212 (PSFE…LHIT). Residue Asn-1163 is glycosylated (N-linked (GlcNAc...) asparagine). A helical transmembrane segment spans residues 1221–1241 (AMVGLAAGGGLLLLAITVVLV). Positions 1240–1294 (LVAYKRKTQDADRTLKRLQLQMDNLESRVALECKEAFAELQTDINELTNHMDGVQ) form a coiled coil. Residues 1242–1872 (AYKRKTQDAD…QIITLVSSSS (631 aa)) are Cytoplasmic-facing. The residue at position 1597 (Ser-1597) is a Phosphoserine.

The protein belongs to the plexin family.

Its subcellular location is the cell membrane. Its function is as follows. Coreceptor for SEMA3A and SEMA3F. Necessary for signaling by class 3 semaphorins and subsequent remodeling of the cytoskeleton. Plays a role in axon guidance in the developing nervous system. Regulates the migration of sympathetic neurons, but not of neural crest precursors. Required for normal dendrite spine morphology in pyramidal neurons. May play a role in regulating semaphorin-mediated programmed cell death in the developing nervous system. Class 3 semaphorins bind to a complex composed of a neuropilin and a plexin. The plexin modulates the affinity of the complex for specific semaphorins, and its cytoplasmic domain is required for the activation of down-stream signaling events in the cytoplasm. This chain is Plexin-A3 (Plxna3), found in Rattus norvegicus (Rat).